The following is a 523-amino-acid chain: Cilia- and flagella-associated protein 157 (523 aa).

Residues 1 to 31 (MAPKKKPNKGGKEMQGKKIGGKKDASGTKTP) are disordered. Residues 10–26 (GGKEMQGKKIGGKKDAS) show a composition bias toward basic and acidic residues. Residue Thr30 is modified to Phosphothreonine. Coiled coils occupy residues 32–191 (ELAM…LEKK), 248–274 (VQLLQENEQLKGTQNKLCQQLEMLENT), and 302–371 (GTEE…VLIQ). Positions 419-440 (QPDMGSHQDKQPQGLSKESQRI) are disordered. The segment covering 429–440 (QPQGLSKESQRI) has biased composition (polar residues).

This sequence belongs to the CFAP157 family. Interacts with TUBB and TUBA4A. Interacts with CEP350. Specifically expressed in tissues containing motile cilia.

It is found in the cytoplasm. Its subcellular location is the cytoskeleton. It localises to the cilium basal body. Specifically required during spermatogenesis for flagellum morphogenesis and sperm motility. May be required to suppress the formation of supernumerary axonemes and ensure a correct ultrastructure. The chain is Cilia- and flagella-associated protein 157 from Mus musculus (Mouse).